Here is a 204-residue protein sequence, read N- to C-terminus: uncharacterized protein (204 aa).

Catalysis depends on C52, which acts as the Acyl-thioester intermediate. Residues H89 and D104 contribute to the active site.

Belongs to the arylamine N-acetyltransferase family.

This is an uncharacterized protein from Acanthamoeba polyphaga mimivirus (APMV).